Here is a 217-residue protein sequence, read N- to C-terminus: 3-demethoxyubiquinol 3-hydroxylase (217 aa).

Residues E66, E96, H99, E148, E180, and H183 each contribute to the Fe cation site.

The protein belongs to the COQ7 family. Fe cation serves as cofactor.

It localises to the cell membrane. It catalyses the reaction a 5-methoxy-2-methyl-3-(all-trans-polyprenyl)benzene-1,4-diol + AH2 + O2 = a 3-demethylubiquinol + A + H2O. The protein operates within cofactor biosynthesis; ubiquinone biosynthesis. Its function is as follows. Catalyzes the hydroxylation of 2-nonaprenyl-3-methyl-6-methoxy-1,4-benzoquinol during ubiquinone biosynthesis. The polypeptide is 3-demethoxyubiquinol 3-hydroxylase (Xylella fastidiosa (strain 9a5c)).